Consider the following 955-residue polypeptide: Serine-aspartate repeat-containing protein C (955 aa).

The first 50 residues, 1–50, serve as a signal peptide directing secretion; sequence MNNKKTVTNRKGMIPNRLNKFSIRKYSVGTASILVGTTLIFGLSGHEAKA. Residues 51-166 are disordered; sequence AEHTNGELNQ…TPKTTTIKPR (116 aa). Residues 51-495 are ligand binding A region; sequence AEHTNGELNQ…GSSTANGDQK (445 aa). The segment covering 56-71 has biased composition (polar residues); the sequence is GELNQSKNETTAPSEN. Positions 72-83 are enriched in basic and acidic residues; that stretch reads KTTEKVDSHQLK. The segment covering 84-114 has biased composition (polar residues); sequence DNTQTATADQPKVTMSDSATFKETSSNMQSP. Residues 115 to 132 show a composition bias toward low complexity; it reads QNATASQSTTQTSNVTTN. Over residues 133 to 164 the composition is skewed to polar residues; that stretch reads DKSSTTYSNETDKSNLTQAKDVSATPKTTTIK. CNA-B domains follow at residues 496-606 and 607-717; these read KYNL…YKTP and KYSL…EEET. The segment at 678–935 is disordered; that stretch reads TQTGTNTTED…NNSNNGTLFG (258 aa). Composition is skewed to acidic residues over residues 685–695 and 712–894; these read TEDDKDADGGE and YYEE…DSDS. The LPXTG sorting signal motif lies at 918–922; that stretch reads LPETG. A compositionally biased stretch (low complexity) spans 920–935; that stretch reads ETGSENNNSNNGTLFG. Thr921 carries the post-translational modification Pentaglycyl murein peptidoglycan amidated threonine. A propeptide spans 922-955 (removed by sortase); the sequence is GSENNNSNNGTLFGGLFAALGSLLLFGRRKKQNK.

Belongs to the serine-aspartate repeat-containing protein (SDr) family. Homodimerizes; via N2-Domain. Interacts with host NRXN1; this interaction mediates bacterial attachment to host cells.

The protein localises to the secreted. Its subcellular location is the cell wall. In terms of biological role, cell surface-associated calcium-binding protein which plays an important role in adhesion and pathogenesis. Mediates interactions with components of the extracellular matrix such as host NRXN1 to promote bacterial adhesion. The chain is Serine-aspartate repeat-containing protein C (sdrC) from Staphylococcus aureus (strain MW2).